The chain runs to 440 residues: MTIQSNEFNVAIVGAGVAGLALAMALHRKGVLFTIYEEAKEYSVVGAGIGFGPNGMQALDLIEPGFRPLYEGLCVGNKSADAQWVFFEGYLLEPGLGDNKPWAGNLKSAWGNQDYVRKSAHRKELLDIMTSFIPIESVKFNKKLVSIKEYTDRVMLEFADGEIVAHSILAGSDGIASTVREYLLRPTHPEEALPVYSGAHCYRAVIPMDEAYEIMGEKTDVAKIYFGHNRGAVSYRITGGKELNFLLIKATPNEQWPYPGRVTKQITQEEMLADFDGDNIDDRFRRLVAKAKPVKWGLFHHAKTSTYYKDRVCILGDSAHASMPFQAAGAAQGVEDALVLAYILEELMKSPTRGSEQLEEINAGLAAYDAIRRPRAQKQLDRAFEVGTMIYFQHPECGDDMTKILHKLQNGWLDWLWFPDLKADVETALSQMRNDVQKKA.

Residues 7–26 (EFNVAIVGAGVAGLALAMAL) traverse the membrane as a helical segment. The FAD site is built by Glu-37 and Gly-50. An N-linked (GlcNAc...) asparagine glycan is attached at Asn-77. Arg-122 provides a ligand contact to FAD. Catalysis depends on residues Arg-203 and Tyr-235. Residues Asp-317 and Ala-330 each coordinate FAD.

It belongs to the paxM FAD-dependent monooxygenase family. The cofactor is FAD.

The protein localises to the membrane. FAD-dependent monooxygenase; part of the Fusarium detoxification of benzoxazolinone cluster 1 (FDB1) involved in the degradation of benzoxazolinones produced by the host plant. Maize, wheat, and rye produce the 2 benzoxazinone phytoanticipins 2,4-dihy-droxy-7-methoxy-1,4-benzoxazin-3-one (DIMBOA) and 2,4-dihydroxy-1,4-benzoxazin-3-one (DIBOA) that, due to their inherent instability once released, spontaneously degrade to the more stable corresponding benzoxazolinones, 6-methoxy-2-benzoxazolinone (MBOA) and 2-benzoxazolinone (BOA), respectively. The first step in the detoxification of benzoxazolinones involves the hydrolysis of the cyclic ester bond of benzoxazolinones by the FDB1 cluster gamma-lactamase MBL1 to aminophenols. MBL1 is able to convert BOA into 2-aminophenol (2-AP), as well as MBOA into 5-methoxy-2-aminophenol (2-AMP). The FDB2 cluster N-malonyltransferase FDB2/NAT1 then metabolizes aminophenols via N-malonylation to non-toxic malonamic acids. FDB2/NAT1 converts 2-AP into N-(2-hydroxyphenyl) malonamic acid (HPMA) and 2-AMP into N-(2-hydroxy-4-methoxyphenyl) malonamic acid (HMPMA). The duplicated dienlactone hydrolases DLH1 and DLH2 may provide redundant function for hydrolyzing the lactone moiety in the BOA molecule. The roles of the amidases an other enzymes encoded by the 2 FDB clusters have not been identified so far. The polypeptide is FAD-dependent monooxygenase FVEG_08293 (Gibberella moniliformis (strain M3125 / FGSC 7600) (Maize ear and stalk rot fungus)).